The sequence spans 101 residues: Small ribosomal subunit protein bS18c (101 aa).

This sequence belongs to the bacterial ribosomal protein bS18 family. As to quaternary structure, part of the 30S ribosomal subunit.

It is found in the plastid. It localises to the chloroplast. The chain is Small ribosomal subunit protein bS18c from Oenothera biennis (German evening primrose).